Reading from the N-terminus, the 94-residue chain is MPKSKVRKKNDFTISPVSRTPVKVKAGPSSVWFVALFVGLMLIGLIWLLVFQLAATNPVDAPGMLQWMADLGPWNYAIAFAFMITGLLLTMRWR.

A run of 2 helical transmembrane segments spans residues 31-51 and 71-91; these read VWFVALFVGLMLIGLIWLLVF and LGPWNYAIAFAFMITGLLLTM.

It belongs to the CrgA family.

It localises to the cell membrane. Its function is as follows. Involved in cell division. This is Cell division protein CrgA from Mycobacterium sp. (strain JLS).